The following is a 125-amino-acid chain: uncharacterized protein (125 aa).

The chain crosses the membrane as a helical span at residues 96–113 (LFMMSIVSSYVCYITVLL).

It is found in the membrane. This is an uncharacterized protein from Saccharomyces cerevisiae (strain ATCC 204508 / S288c) (Baker's yeast).